A 553-amino-acid polypeptide reads, in one-letter code: Cytochrome P450 monooxygenase alnD (553 aa).

Residues 351-371 traverse the membrane as a helical segment; the sequence is LVGAGFVTSSAFLSWLIYSLV. Residue cysteine 493 coordinates heme. N-linked (GlcNAc...) asparagine glycosylation is present at asparagine 518.

This sequence belongs to the cytochrome P450 family. Heme serves as cofactor.

Its subcellular location is the membrane. It participates in polyketide biosynthesis. Functionally, cytochrome P450 monooxygenase; part of the gene cluster that mediates the biosynthesis of asperlin, a polyketide showing anti-inflammatory, antitumor and antibiotic activities. The first step of the asperlin biosynthesis is the production of the intermediate 2,4,6-octatrienoic acid by the highly redusing polyketide synthase alnA with cleavage of the PKS product by the esterase alnB. 2,4,6-octatrienoic acid is further converted to asperlin via several steps involving the remaining enzymes from the cluster. The sequence is that of Cytochrome P450 monooxygenase alnD from Emericella nidulans (strain FGSC A4 / ATCC 38163 / CBS 112.46 / NRRL 194 / M139) (Aspergillus nidulans).